Consider the following 454-residue polypeptide: N-myc 2 proto-oncogene protein (454 aa).

3 disordered regions span residues 132–166 (SEKM…HSGT), 230–269 (VAAP…DEEE), and 325–374 (PSPY…VRRR). Low complexity predominate over residues 151–161 (PGAGAASPAGR). A compositionally biased stretch (acidic residues) spans 256 to 269 (ALSDEVDEEEDEEE). Residues 363–374 (RKSDSEDSVRRR) show a composition bias toward basic and acidic residues. The bHLH domain occupies 371–423 (VRRRNHNILERQRRNDLRSSFTTLRDHVPELVKNEKAAKVVILKKACEYVHYL). Residues 423 to 444 (LQAKEHQLLMEKEKLQARQQQL) are leucine-zipper.

Efficient DNA binding requires dimerization with another bHLH protein.

The protein localises to the nucleus. The sequence is that of N-myc 2 proto-oncogene protein (N-MYC2) from Marmota monax (Woodchuck).